The primary structure comprises 431 residues: MAQFYSAKRRVTTRQIITVEATDLDPFGQGVARHNGKALFIPGLLPNERAEVTLTEDKSKYSRGQVKRRLNDSPERVAPRCPHFGVCGGCQQQHASVALQQSSKSTALARLMKHEVNEIISGEPWGYRRRARLSLSYEPKTQKLAMGFRKAASSDIVDVKQCPVLVPHLEALLPHLRNCLSDLQGARALGHVELVLADNGPLMVLRHTAPLSAPDREKLERFSHSHELTLFLAPQSEILERVSGDDPWYLSDGLRLTFSPRDFIQVNDGVNQQMVAKAIEWLDVQPDDRVLDLFCGMGNFTLPLAQRAASVVGVEGVNALVEKGQQNAHHNALDNVTFFHENLEEDVTQQPWAQHGFDKVLLDPARAGAPGVMQHIIKLAPKRVVYVSCNPATLARDSEALLSAGYQIQRLAMLDMFPHTGHLESMVLFQL.

The TRAM domain maps to 8 to 68 (KRRVTTRQII…SKYSRGQVKR (61 aa)). Residues Cys-81, Cys-87, Cys-90, and Cys-162 each contribute to the [4Fe-4S] cluster site. Gln-265, Phe-294, Asn-299, Glu-315, Asn-342, and Asp-363 together coordinate S-adenosyl-L-methionine. The active-site Nucleophile is Cys-389.

The protein belongs to the class I-like SAM-binding methyltransferase superfamily. RNA M5U methyltransferase family. RlmD subfamily.

It carries out the reaction uridine(1939) in 23S rRNA + S-adenosyl-L-methionine = 5-methyluridine(1939) in 23S rRNA + S-adenosyl-L-homocysteine + H(+). Catalyzes the formation of 5-methyl-uridine at position 1939 (m5U1939) in 23S rRNA. The sequence is that of 23S rRNA (uracil(1939)-C(5))-methyltransferase RlmD from Enterobacter sp. (strain 638).